Here is a 470-residue protein sequence, read N- to C-terminus: Ribulose bisphosphate carboxylase large chain (470 aa).

Substrate contacts are provided by N115 and T165. K167 (proton acceptor) is an active-site residue. K169 contributes to the substrate binding site. Residues K193, D195, and E196 each coordinate Mg(2+). K193 is subject to N6-carboxylysine. The active-site Proton acceptor is H286. Substrate contacts are provided by R287, H319, and S371.

It belongs to the RuBisCO large chain family. Type I subfamily. As to quaternary structure, heterohexadecamer of 8 large chains and 8 small chains. The cofactor is Mg(2+).

The protein localises to the carboxysome. The enzyme catalyses 2 (2R)-3-phosphoglycerate + 2 H(+) = D-ribulose 1,5-bisphosphate + CO2 + H2O. The catalysed reaction is D-ribulose 1,5-bisphosphate + O2 = 2-phosphoglycolate + (2R)-3-phosphoglycerate + 2 H(+). Functionally, ruBisCO catalyzes two reactions: the carboxylation of D-ribulose 1,5-bisphosphate, the primary event in carbon dioxide fixation, as well as the oxidative fragmentation of the pentose substrate in the photorespiration process. Both reactions occur simultaneously and in competition at the same active site. This chain is Ribulose bisphosphate carboxylase large chain, found in Synechococcus sp. (strain CC9311).